A 316-amino-acid polypeptide reads, in one-letter code: Secondary metabolism regulator laeA (316 aa).

The protein belongs to the methyltransferase superfamily. LaeA methyltransferase family. As to quaternary structure, component of the heterotrimeric velvet complex composed of laeA, ve1 and velB; Ve1 acting as a bridging protein between laeA and velB. Interacts directly with veA.

It is found in the nucleus. It localises to the cytoplasm. It catalyses the reaction L-methionyl-[protein] + S-adenosyl-L-methionine = S-methyl-L-methionyl-[protein] + S-adenosyl-L-homocysteine. Methyltransferase that performs automethylation. No other methyl-accepting substrate has been identified yet. Component of the velvet transcription factor complex that acts as a global regulator for secondary metabolite gene expression. Controls the expression of the mycotoxins trichothecenes and zearalenon gene clusters. Negatively controls perithecial induction, but positively controls virulence toward the host plant. This Gibberella zeae (strain ATCC MYA-4620 / CBS 123657 / FGSC 9075 / NRRL 31084 / PH-1) (Wheat head blight fungus) protein is Secondary metabolism regulator laeA.